Consider the following 475-residue polypeptide: Ribulose bisphosphate carboxylase large chain (475 aa).

Residues methionine 1–serine 2 constitute a propeptide that is removed on maturation. Proline 3 bears the N-acetylproline mark. The residue at position 14 (lysine 14) is an N6,N6,N6-trimethyllysine. Residues asparagine 123 and threonine 173 each coordinate substrate. Lysine 175 (proton acceptor) is an active-site residue. A substrate-binding site is contributed by lysine 177. Mg(2+) contacts are provided by lysine 201, aspartate 203, and glutamate 204. Lysine 201 carries the post-translational modification N6-carboxylysine. Catalysis depends on histidine 294, which acts as the Proton acceptor. 3 residues coordinate substrate: arginine 295, histidine 327, and serine 379.

This sequence belongs to the RuBisCO large chain family. Type I subfamily. In terms of assembly, heterohexadecamer of 8 large chains and 8 small chains; disulfide-linked. The disulfide link is formed within the large subunit homodimers. It depends on Mg(2+) as a cofactor. The disulfide bond which can form in the large chain dimeric partners within the hexadecamer appears to be associated with oxidative stress and protein turnover.

Its subcellular location is the plastid. The protein localises to the chloroplast. It carries out the reaction 2 (2R)-3-phosphoglycerate + 2 H(+) = D-ribulose 1,5-bisphosphate + CO2 + H2O. The catalysed reaction is D-ribulose 1,5-bisphosphate + O2 = 2-phosphoglycolate + (2R)-3-phosphoglycerate + 2 H(+). In terms of biological role, ruBisCO catalyzes two reactions: the carboxylation of D-ribulose 1,5-bisphosphate, the primary event in carbon dioxide fixation, as well as the oxidative fragmentation of the pentose substrate in the photorespiration process. Both reactions occur simultaneously and in competition at the same active site. The sequence is that of Ribulose bisphosphate carboxylase large chain from Clarkia xantiana (Gunsight clarkia).